Reading from the N-terminus, the 391-residue chain is Large envelope protein (391 aa).

Met-1 is subject to N-acetylmethionine. Gly-2 is lipidated: N-myristoyl glycine; by host. The tract at residues 2–108 is pre-S1; the sequence is GLNQSTFNPL…PPLRDTHPQA (107 aa). A pre-S region spans residues 2–163; it reads GLNQSTFNPL…FSTTGVPVST (162 aa). Topologically, residues 2-170 are virion surface; in external conformation; that stretch reads GLNQSTFNPL…VSTMDITSSG (169 aa). Over 2–242 the chain is Intravirion; in internal conformation; sequence GLNQSTFNPL…PGYRWMCLRR (241 aa). The interval 73-107 is disordered; the sequence is LSVTVPDTPPPPSTNRDKGRKPTPATPPLRDTHPQ. The pre-S2 stretch occupies residues 109–163; it reads MTWNTSSFQSYLQNPKVRGLYFPAGGSTSSIVNPVPTTASTTSSSFSTTGVPVST. The chain crosses the membrane as a helical span at residues 171-191; the sequence is FLGPLLALQAVFFLLTKILTM. The Intravirion; in external conformation segment spans residues 192 to 242; the sequence is PQSLDSLWTSLNFLGGTPACPGLNSQSPTSSHSPTCCPPTCPGYRWMCLRR. A helical membrane pass occupies residues 243–263; sequence SIIFLFILLLCLIFLLVLLDY. At 264-339 the chain is on the virion surface side; that stretch reads QGMLPVCPLL…WALARFSWLN (76 aa). Asn-311 carries N-linked (GlcNAc...) asparagine; by host glycosylation. A helical transmembrane segment spans residues 340–360; it reads SLLPFVQWFAGLSPTVWLLVI. Over 361–366 the chain is Intravirion; sequence WMMWFW. Residues 367–389 form a helical membrane-spanning segment; it reads GPSLFSILSPFLPLLPLFFWLWA. The Virion surface segment spans residues 390 to 391; sequence YI.

The protein belongs to the orthohepadnavirus major surface antigen family. In its internal form (Li-HBsAg), interacts with the capsid protein and with the isoform S. Interacts with host chaperone CANX. As to quaternary structure, associates with host chaperone CANX through its pre-S2 N glycan; this association may be essential for isoform M proper secretion. In terms of assembly, interacts with isoform L. Interacts with the antigens of satellite virus HDV (HDVAgs); this interaction is required for encapsidation of HDV genomic RNA. In terms of processing, isoform M is N-terminally acetylated by host at a ratio of 90%, and N-glycosylated by host at the pre-S2 region. Post-translationally, myristoylated.

It localises to the virion membrane. Functionally, the large envelope protein exists in two topological conformations, one which is termed 'external' or Le-HBsAg and the other 'internal' or Li-HBsAg. In its external conformation the protein attaches the virus to cell receptors and thereby initiating infection. This interaction determines the species specificity and liver tropism. This attachment induces virion internalization predominantly through caveolin-mediated endocytosis. The large envelope protein also assures fusion between virion membrane and endosomal membrane. In its internal conformation the protein plays a role in virion morphogenesis and mediates the contact with the nucleocapsid like a matrix protein. In terms of biological role, the middle envelope protein plays an important role in the budding of the virion. It is involved in the induction of budding in a nucleocapsid independent way. In this process the majority of envelope proteins bud to form subviral lipoprotein particles of 22 nm of diameter that do not contain a nucleocapsid. The protein is Large envelope protein of Woolly monkey hepatitis B virus (isolate Louisville) (WMHBV).